We begin with the raw amino-acid sequence, 353 residues long: Photosystem II protein D1 (353 aa).

Position 2 is an N-acetylthreonine (T2). Phosphothreonine is present on T2. The next 3 membrane-spanning stretches (helical) occupy residues 29 to 46, 118 to 133, and 142 to 156; these read YIGW…TATS, HFLL…EWEL, and WIAV…AATA. A chlorophyll a-binding site is contributed by H118. A pheophytin a-binding site is contributed by Y126. [CaMn4O5] cluster contacts are provided by D170 and E189. Residues 197–218 traverse the membrane as a helical segment; it reads FHMLGVAGVFGSSLFSAMHGSL. H198 lines the chlorophyll a pocket. Residues H215 and 264 to 265 contribute to the a quinone site; that span reads SF. H215 provides a ligand contact to Fe cation. H272 is a binding site for Fe cation. Residues 274-288 form a helical membrane-spanning segment; it reads FLAAWPVVGIWFTAL. Residues H332, E333, D342, and A344 each contribute to the [CaMn4O5] cluster site. The propeptide occupies 345–353; sequence AMEAPSVNG.

Belongs to the reaction center PufL/M/PsbA/D family. PSII is composed of 1 copy each of membrane proteins PsbA, PsbB, PsbC, PsbD, PsbE, PsbF, PsbH, PsbI, PsbJ, PsbK, PsbL, PsbM, PsbT, PsbX, PsbY, PsbZ, Psb30/Ycf12, at least 3 peripheral proteins of the oxygen-evolving complex and a large number of cofactors. It forms dimeric complexes. The D1/D2 heterodimer binds P680, chlorophylls that are the primary electron donor of PSII, and subsequent electron acceptors. It shares a non-heme iron and each subunit binds pheophytin, quinone, additional chlorophylls, carotenoids and lipids. D1 provides most of the ligands for the Mn4-Ca-O5 cluster of the oxygen-evolving complex (OEC). There is also a Cl(-1) ion associated with D1 and D2, which is required for oxygen evolution. The PSII complex binds additional chlorophylls, carotenoids and specific lipids. is required as a cofactor. Post-translationally, tyr-161 forms a radical intermediate that is referred to as redox-active TyrZ, YZ or Y-Z. C-terminally processed by CTPA; processing is essential to allow assembly of the oxygen-evolving complex and thus photosynthetic growth.

The protein resides in the plastid. It localises to the chloroplast thylakoid membrane. It catalyses the reaction 2 a plastoquinone + 4 hnu + 2 H2O = 2 a plastoquinol + O2. Its function is as follows. Photosystem II (PSII) is a light-driven water:plastoquinone oxidoreductase that uses light energy to abstract electrons from H(2)O, generating O(2) and a proton gradient subsequently used for ATP formation. It consists of a core antenna complex that captures photons, and an electron transfer chain that converts photonic excitation into a charge separation. The D1/D2 (PsbA/PsbD) reaction center heterodimer binds P680, the primary electron donor of PSII as well as several subsequent electron acceptors. The chain is Photosystem II protein D1 from Vigna unguiculata (Cowpea).